The chain runs to 151 residues: Putative pre-16S rRNA nuclease (151 aa).

This sequence belongs to the YqgF nuclease family.

It localises to the cytoplasm. In terms of biological role, could be a nuclease involved in processing of the 5'-end of pre-16S rRNA. This Thermosynechococcus vestitus (strain NIES-2133 / IAM M-273 / BP-1) protein is Putative pre-16S rRNA nuclease.